The following is a 330-amino-acid chain: Protein pelota homolog (330 aa).

Belongs to the eukaryotic release factor 1 family. Pelota subfamily. Monomer. Requires a divalent metal cation as cofactor.

Its subcellular location is the cytoplasm. In terms of biological role, may function in recognizing stalled ribosomes, interact with stem-loop structures in stalled mRNA molecules, and effect endonucleolytic cleavage of the mRNA. May play a role in the release non-functional ribosomes and degradation of damaged mRNAs. Has endoribonuclease activity. The sequence is that of Protein pelota homolog from Pyrobaculum islandicum (strain DSM 4184 / JCM 9189 / GEO3).